A 469-amino-acid chain; its full sequence is Glutamate--tRNA ligase (469 aa).

The short motif at Pro9–Gly19 is the 'HIGH' region element. Zn(2+) contacts are provided by Cys98, Cys100, Cys125, and Asp127. The short motif at Lys236–Arg240 is the 'KMSKS' region element. An ATP-binding site is contributed by Lys239.

The protein belongs to the class-I aminoacyl-tRNA synthetase family. Glutamate--tRNA ligase type 1 subfamily. In terms of assembly, monomer. The cofactor is Zn(2+).

It localises to the cytoplasm. The catalysed reaction is tRNA(Glu) + L-glutamate + ATP = L-glutamyl-tRNA(Glu) + AMP + diphosphate. In terms of biological role, catalyzes the attachment of glutamate to tRNA(Glu) in a two-step reaction: glutamate is first activated by ATP to form Glu-AMP and then transferred to the acceptor end of tRNA(Glu). The chain is Glutamate--tRNA ligase from Shewanella baltica (strain OS185).